The sequence spans 1381 residues: Protein HEG homolog 1 (1381 aa).

An N-terminal signal peptide occupies residues 1-29; the sequence is MASPRASRWPPPLLLLLLPLLLLPPAAPG. Positions 24–108 are disordered; sequence PPAAPGTRDP…APRGGSADAA (85 aa). The segment covering 25–37 has biased composition (pro residues); sequence PAAPGTRDPPPSP. Residues 30–1248 lie on the Extracellular side of the membrane; it reads TRDPPPSPAR…GLNCGNPYQL (1219 aa). A compositionally biased stretch (low complexity) spans 38–52; it reads ARRALSLAPLAGAGL. Residues 55–74 are compositionally biased toward basic and acidic residues; the sequence is QLERRPEREPPPTPPRERRG. An O-linked (GalNAc...) threonine glycan is attached at Thr-67. Low complexity predominate over residues 93–105; it reads RGPSGRAPRGGSA. N-linked (GlcNAc...) asparagine glycans are attached at residues Asn-123, Asn-159, Asn-180, and Asn-314. Residues 301 to 316 are compositionally biased toward low complexity; the sequence is DLSSSSESTEKLNNST. 2 disordered regions span residues 301 to 325 and 376 to 447; these read DLSS…SVSQ and PSAV…RSVA. The span at 424-444 shows a compositional bias: polar residues; that stretch reads LASSSEVQNGSPMSQTETVSR. N-linked (GlcNAc...) asparagine glycans are attached at residues Asn-462, Asn-520, and Asn-610. Positions 491–529 are disordered; that stretch reads STVQSGGSHTALGDRSYSESSSTSSSESLNSSAPRGERS. A compositionally biased stretch (low complexity) spans 508 to 522; sequence SESSSTSSSESLNSS. Disordered stretches follow at residues 612–680, 706–757, and 774–830; these read SSYD…PLPS, SDAS…PVTS, and QTAD…TLPA. Residues 620-648 show a composition bias toward polar residues; sequence QPSTESPVLHTSNLPSYTPTINMPNTSVV. Low complexity-rich tracts occupy residues 657–680 and 706–748; these read SDSS…PLPS and SDAS…PVLP. Composition is skewed to polar residues over residues 774-784 and 792-809; these read QTADLKSQSTP and ESKS…TKAV. Residues 810–825 show a composition bias toward low complexity; it reads TTNSPLPPSLTESSTE. One can recognise an EGF-like 1 domain in the interval 985-1023; the sequence is SVNSCAVNPCLHNGECVADNTSRGYHCRCPPSWQGDDCS. Disulfide bonds link Cys-989-Cys-1000, Cys-994-Cys-1011, Cys-1013-Cys-1022, Cys-1029-Cys-1040, Cys-1034-Cys-1049, and Cys-1051-Cys-1062. An EGF-like 2; calcium-binding domain is found at 1025–1063; sequence DVNECLSNPCPSTAMCNNTQGSFICKCPVGYQLEKGICN. Asn-1137 is a glycosylation site (N-linked (GlcNAc...) asparagine). A helical membrane pass occupies residues 1249-1269; that stretch reads ITVVIAAAGGGLLLILGIALI. Residues 1270–1381 lie on the Cytoplasmic side of the membrane; the sequence is VTCCRKNKND…SDESRRRDYF (112 aa). Ser-1359 carries the post-translational modification Phosphoserine.

Interacts with CCM2 and KRIT1; KRIT1 markedly facilitates interaction with CCM2.

Its subcellular location is the cell membrane. It is found in the cell junction. It localises to the secreted. In terms of biological role, receptor component of the CCM signaling pathway which is a crucial regulator of heart and vessel formation and integrity. May act through the stabilization of endothelial cell junctions. This is Protein HEG homolog 1 (HEG1) from Homo sapiens (Human).